The following is a 180-amino-acid chain: MSRVGKLPVKIPEKVKVSVDGNVVKVEGPKGKMHFPTNPLVSVQVDKGEVKVARQDESHVAKGLHGLTRTLVKNALEGVVKGYEKGLEINGVGFKAEVKGKEIHFTLGFSHPVVFKLPDGVTAEVDAKQTKLTIRSVDKHLLGLTAAKVRALRPPEPYKGKGIKYADETIRRKEGKTGAA.

This sequence belongs to the universal ribosomal protein uL6 family. As to quaternary structure, part of the 50S ribosomal subunit.

Functionally, this protein binds to the 23S rRNA, and is important in its secondary structure. It is located near the subunit interface in the base of the L7/L12 stalk, and near the tRNA binding site of the peptidyltransferase center. This is Large ribosomal subunit protein uL6 from Anaeromyxobacter dehalogenans (strain 2CP-1 / ATCC BAA-258).